The sequence spans 98 residues: Keratinocyte differentiation-associated protein (98 aa).

The first 22 residues, 1–22 (MKIPILPIVALLSLLALHAAQG), serve as a signal peptide directing secretion.

In terms of tissue distribution, ubiquitously expressed in stratified epithelium.

The protein localises to the secreted. May act as a soluble regulator of keratinocyte differentiation. May play an important role in embryonic skin morphogenesis. In Rattus norvegicus (Rat), this protein is Keratinocyte differentiation-associated protein.